The chain runs to 248 residues: tRNA pseudouridine synthase A (248 aa).

The active-site Nucleophile is the Asp53. Substrate is bound at residue Tyr111.

The protein belongs to the tRNA pseudouridine synthase TruA family. As to quaternary structure, homodimer.

The catalysed reaction is uridine(38/39/40) in tRNA = pseudouridine(38/39/40) in tRNA. Formation of pseudouridine at positions 38, 39 and 40 in the anticodon stem and loop of transfer RNAs. The chain is tRNA pseudouridine synthase A from Listeria monocytogenes serotype 4a (strain HCC23).